Consider the following 273-residue polypeptide: SKA complex subunit 1 homolog (273 aa).

The stretch at 77 to 97 forms a coiled coil; it reads KKLVQRSLKEEEKLQHMLANL.

Belongs to the SKA1 family.

This Zea mays (Maize) protein is SKA complex subunit 1 homolog.